The primary structure comprises 176 residues: MKIPKEGDFITIQSYKHDGNLHRTWRDTMVLKTNENSIIGVNDHTLVTESDDRRWVTREPAIVYFHKKFWFNIIAMIREEGVSYYCNLASPFVLDNEALKYIDYDLDVKVFKDGEKKLLDVEEYERHRRKMHYPKEIDHILKENVKILVDWINNEKGPFSKEYVEIWYNRYHQLKK.

The Proton donor role is filled by R23. Mg(2+)-binding residues include N87, D103, D105, D107, D120, and E123.

This sequence belongs to the Ntdp family. Requires Mg(2+) as cofactor.

The catalysed reaction is a ribonucleoside 5'-triphosphate + H2O = a ribonucleoside 5'-diphosphate + phosphate + H(+). The enzyme catalyses a ribonucleoside 5'-diphosphate + H2O = a ribonucleoside 5'-phosphate + phosphate + H(+). Its function is as follows. Has nucleoside phosphatase activity towards nucleoside triphosphates and nucleoside diphosphates. The polypeptide is Nucleoside triphosphate/diphosphate phosphatase (yjjG) (Lactococcus lactis subsp. lactis (strain IL1403) (Streptococcus lactis)).